The following is a 231-amino-acid chain: Ribonuclease 3 (231 aa).

Positions 5-134 (QKGIKEDFGI…FIGALYKDQG (130 aa)) constitute an RNase III domain. Glu47 lines the Mg(2+) pocket. The active site involves Asp51. Residues Asp120 and Glu123 each coordinate Mg(2+). Residue Glu123 is part of the active site. One can recognise a DRBM domain in the interval 160-230 (DYKSKLQELL…AKKAYQDVTP (71 aa)).

Belongs to the ribonuclease III family. As to quaternary structure, homodimer. Mg(2+) serves as cofactor.

Its subcellular location is the cytoplasm. It carries out the reaction Endonucleolytic cleavage to 5'-phosphomonoester.. In terms of biological role, digests double-stranded RNA. Involved in the processing of primary rRNA transcript to yield the immediate precursors to the large and small rRNAs (23S and 16S). Processes some mRNAs, and tRNAs when they are encoded in the rRNA operon. Processes pre-crRNA and tracrRNA of type II CRISPR loci if present in the organism. This is Ribonuclease 3 from Oenococcus oeni (strain ATCC BAA-331 / PSU-1).